A 55-amino-acid chain; its full sequence is Spermatid nuclear transition protein 1 (55 aa).

The span at 1-42 (MSTSRKLKSQGMRRGKNRTPHKGVKRSGSKRKYRKSSLKSRK) shows a compositional bias: basic residues. The tract at residues 1–55 (MSTSRKLKSQGMRRGKNRTPHKGVKRSGSKRKYRKSSLKSRKRCDDANRNLRSHL) is disordered. 4 positions are modified to phosphoserine: serine 9, serine 36, serine 37, and serine 40.

This sequence belongs to the nuclear transition protein 1 family. As to expression, testis.

Its subcellular location is the nucleus. It localises to the chromosome. Plays a key role in the replacement of histones to protamine in the elongating spermatids of mammals. In condensing spermatids, loaded onto the nucleosomes, where it promotes the recruitment and processing of protamines, which are responsible for histone eviction. In Bos taurus (Bovine), this protein is Spermatid nuclear transition protein 1 (TNP1).